The primary structure comprises 427 residues: Septin-6 (427 aa).

Ala2 is subject to N-acetylalanine. Position 27 is a phosphoserine (Ser27). A Septin-type G domain is found at 39 to 305 (QGFCFNILCV…ELYRRCKLEE (267 aa)). Positions 49–56 (GETGLGKS) are G1 motif. GTP-binding positions include 49-56 (GETGLGKS), Gly104, 185-193 (KSDAISKSE), Gly239, and Arg254. Positions 101–104 (STVG) are G3 motif. A G4 motif region spans residues 184–187 (AKSD). The stretch at 321 to 416 (QETYEAKRNE…QSQGSQAGGS (96 aa)) forms a coiled coil. Position 367 is an N6-acetyllysine (Lys367). A disordered region spans residues 405 to 427 (LLQSQGSQAGGSQTLKRDKEKKN). Positions 407–417 (QSQGSQAGGSQ) are enriched in low complexity. Position 416 is a phosphoserine (Ser416). Thr418 carries the post-translational modification Phosphothreonine.

Belongs to the TRAFAC class TrmE-Era-EngA-EngB-Septin-like GTPase superfamily. Septin GTPase family. As to quaternary structure, septins polymerize into heterooligomeric protein complexes that form filaments, and associate with cellular membranes, actin filaments and microtubules. GTPase activity is required for filament formation. Filaments are assembled from asymmetrical heterotrimers, composed of SEPTIN2, SEPTIN6 and SEPTIN7 that associate head-to-head to form a hexameric unit. Within the trimer, directly interacts with SEPTIN2 and SEPTIN7. Also interacts with SEPTIN9 and SEPTIN12. Interaction with SEPTIN12 alters filament structure. Component of a septin core octameric complex consisting of SEPTIN12, SEPTIN7, SEPTIN6 and SEPTIN2 or SEPTIN4 in the order 12-7-6-2-2-6-7-12 or 12-7-6-4-4-6-7-12 and located in the sperm annulus. Interacts with SOCS7. Interacts with HNRNPA1.

The protein resides in the cytoplasm. It is found in the cytoskeleton. It localises to the spindle. Its subcellular location is the chromosome. The protein localises to the centromere. The protein resides in the kinetochore. It is found in the cleavage furrow. It localises to the midbody. Its subcellular location is the cell projection. The protein localises to the cilium. The protein resides in the flagellum. Filament-forming cytoskeletal GTPase. Required for normal organization of the actin cytoskeleton. Involved in cytokinesis. Forms a filamentous structure with SEPTIN12, SEPTIN6, SEPTIN2 and probably SEPTIN4 at the sperm annulus which is required for the structural integrity and motility of the sperm tail during postmeiotic differentiation. This chain is Septin-6, found in Bos taurus (Bovine).